The primary structure comprises 285 residues: Transcription factor LBX1 (285 aa).

A compositionally biased stretch (basic and acidic residues) spans Met-1–Leu-20. The interval Met-1–Phe-36 is disordered. Residues Arg-125 to Leu-184 constitute a DNA-binding region (homeobox). The interval Glu-212–Asp-285 is disordered. Residues Ser-218 to Gly-230 show a composition bias toward gly residues. Residues Cys-272–Asp-285 are compositionally biased toward acidic residues.

In terms of assembly, interacts with SKOR1 which acts as a transcriptional corepressor.

The protein localises to the nucleus. In terms of biological role, transcription factor required for the development of GABAergic interneurons in the dorsal horn of the spinal cord and migration and further development of hypaxial muscle precursor cells for limb muscles, diaphragm and hypoglossal cord. This chain is Transcription factor LBX1, found in Rattus norvegicus (Rat).